Reading from the N-terminus, the 186-residue chain is uncharacterized protein (186 aa).

3 helical membrane-spanning segments follow: residues 42–62 (ISIA…LSVL), 80–100 (LLFL…IGLV), and 131–151 (ICGI…FIVL).

The protein to U.parvum UU008, UU041 and UU042.

It is found in the cell membrane. This is an uncharacterized protein from Ureaplasma parvum serovar 3 (strain ATCC 700970).